A 162-amino-acid chain; its full sequence is Peptidyl-prolyl cis-trans isomerase (162 aa).

Residues 5–161 (FFDVIANGQP…ARIVIDKCGT (157 aa)) form the PPIase cyclophilin-type domain.

This sequence belongs to the cyclophilin-type PPIase family. PPIase A subfamily.

It is found in the cytoplasm. It carries out the reaction [protein]-peptidylproline (omega=180) = [protein]-peptidylproline (omega=0). Its activity is regulated as follows. Binds cyclosporin A (CsA). CsA mediates some of its effects via an inhibitory action on PPIase. PPIases accelerate the folding of proteins. It catalyzes the cis-trans isomerization of proline imidic peptide bonds in oligopeptides. In Schizosaccharomyces pombe (strain 972 / ATCC 24843) (Fission yeast), this protein is Peptidyl-prolyl cis-trans isomerase (ppi1).